The chain runs to 381 residues: Gustatory and pheromone receptor 39a, isoform C (381 aa).

Residues 1 to 37 (MDFQPGELCAYYRLCRYLGIFCIDYNPTKKKFRLRRS) are Cytoplasmic-facing. The chain crosses the membrane as a helical span at residues 38 to 58 (VLCYIVHFALQAYLVGCISVM). Residues 59-79 (VTYWRRCFKSELTTTGNHFDR) lie on the Extracellular side of the membrane. Residues 80–100 (LVMVIALGILVVQNAWLIWLQ) traverse the membrane as a helical segment. The Cytoplasmic portion of the chain corresponds to 101–129 (APHLRIVRQIEFYRRNHLANVRLLLPKRL). Residues 130–150 (LWLIIATNVVYMANFIKTCIF) form a helical membrane-spanning segment. Residues 151-171 (EWLTDASRLFVITSLGFPLRY) are Extracellular-facing. A helical transmembrane segment spans residues 172–192 (LVTSFTMGTYFCMVHIVRLVL). At 193–239 (DWNQSQINAIIDESADLKMTSPNRLRLRVCLEMHDRLMLLCNDEISL) the chain is on the cytoplasmic side. The helical transmembrane segment at 240–260 (VYGFIAWLSWMFASLDVTGVI) threads the bilayer. Residues 261 to 271 (YLTMVIQTKKS) lie on the Extracellular side of the membrane. Residues 272 to 292 (IVLKLITNVVWLSPTFMTCAA) form a helical membrane-spanning segment. Residues 293–350 (SFMSNRVTIQANKTAKMLTKVPRTGTGLDRMIEKFLLKNLRQKPILTAYGFFALDKST) are Cytoplasmic-facing. The helical transmembrane segment at 351–371 (LFKLFTAIFTYMVILVQFKEM) threads the bilayer. Topologically, residues 372-381 (ENSTKSINKF) are extracellular. N373 carries N-linked (GlcNAc...) asparagine glycosylation.

The protein belongs to the insect chemoreceptor superfamily. Gustatory receptor (GR) family. Gr21a subfamily. Expressed in the adult labellar chemosensory neurons. In larvae, is expressed in neurons of the terminal external chemosensory organ, as well as in the dorsal pharyngeal sense organ.

It localises to the cell membrane. Functionally, gustatory receptor which mediates acceptance or avoidance behavior, depending on its substrates. Plays a role in sustaining courtship behavior in males, possibly through the reception of a stimulating arrestant pheromone. The protein is Gustatory and pheromone receptor 39a, isoform C (Gr39a) of Drosophila melanogaster (Fruit fly).